The chain runs to 504 residues: L-amino-acid oxidase (504 aa).

The N-terminal stretch at 1-18 (MNVFFMFSLLFLAALGSC) is a signal peptide. Cys28 and Cys191 form a disulfide bridge. Residues 61–62 (MS), 81–82 (EA), Arg89, and 105–108 (GPMR) each bind FAD. Residue Arg108 participates in substrate binding. N-linked (GlcNAc...) asparagine glycosylation occurs at Asn190. His241 serves as a coordination point for substrate. Val279 contacts FAD. A disulfide bond links Cys349 and Cys430. N-linked (GlcNAc...) asparagine glycosylation is present at Asn379. Tyr390 is a substrate binding site. FAD contacts are provided by residues Glu475 and 482–487 (GWIDST). 482 to 483 (GW) contributes to the substrate binding site.

Belongs to the flavin monoamine oxidase family. FIG1 subfamily. In terms of assembly, homodimer; non-covalently linked. Requires FAD as cofactor. As to expression, expressed by the venom gland.

It is found in the secreted. It catalyses the reaction an L-alpha-amino acid + O2 + H2O = a 2-oxocarboxylate + H2O2 + NH4(+). The catalysed reaction is L-leucine + O2 + H2O = 4-methyl-2-oxopentanoate + H2O2 + NH4(+). In terms of biological role, catalyzes an oxidative deamination of predominantly hydrophobic and aromatic L-amino acids, thus producing hydrogen peroxide that may contribute to the diverse toxic effects of this enzyme. Shows activity on L-Leu. Exhibits diverse biological activities, such as apoptosis, and inhibition of agonist- and shear stress-induced platelet aggregation (SIPA). Effects of snake L-amino oxidases on platelets are controversial, since they either induce aggregation or inhibit agonist-induced aggregation. These different effects are probably due to different experimental conditions. This protein may also induce hemorrhage, hemolysis, edema, antibacterial and antiparasitic activities. This chain is L-amino-acid oxidase, found in Gloydius blomhoffii (Mamushi).